The primary structure comprises 510 residues: Protein phosphatase EYA3 (510 aa).

Disordered regions lie at residues 1 to 32 (MQEPREQTLSQVNNPDASDEKPETSSLASNLS) and 175 to 233 (YQTE…DASS). Positions 7–16 (QTLSQVNNPD) are enriched in polar residues. A compositionally biased stretch (low complexity) spans 192-203 (LPSDSSASPPLS). Phosphoserine occurs at positions 199 and 203. D246 functions as the Nucleophile in the catalytic mechanism. Mg(2+)-binding residues include D246 and D248. D248 (proton donor) is an active-site residue. S375 and S409 each carry phosphoserine. D474 contacts Mg(2+).

This sequence belongs to the HAD-like hydrolase superfamily. EYA family. Interacts with SIX1 and DACH1, and probably SIX2, SIX4 and SIX5. Mg(2+) serves as cofactor. Post-translationally, ser-203 phosphorylation is required for localization at sites of DNA damage and directing interaction with H2AX. Expressed in branchial arches, CNS and developing eye.

Its subcellular location is the cytoplasm. It localises to the nucleus. It carries out the reaction O-phospho-L-tyrosyl-[protein] + H2O = L-tyrosyl-[protein] + phosphate. Tyrosine phosphatase that specifically dephosphorylates 'Tyr-142' of histone H2AX (H2AXY142ph). 'Tyr-142' phosphorylation of histone H2AX plays a central role in DNA repair and acts as a mark that distinguishes between apoptotic and repair responses to genotoxic stress. Promotes efficient DNA repair by dephosphorylating H2AX, promoting the recruitment of DNA repair complexes containing MDC1. Its function as histone phosphatase probably explains its role in transcription regulation during organogenesis. The phosphatase activity has been shown in vitro. Coactivates SIX1. Seems to coactivate SIX2, SIX4 and SIX5. The repression of precursor cell proliferation in myoblasts by SIX1 is switched to activation through recruitment of EYA3 to the SIX1-DACH1 complex and seems to be dependent on EYA3 phosphatase activity. May be involved in development of the eye. May play a role in mediating the induction and differentiation of cranial placodes. The protein is Protein phosphatase EYA3 (Eya3) of Mus musculus (Mouse).